The chain runs to 281 residues: Insulin-like growth factor-binding protein 2 (281 aa).

A signal peptide spans 1-21 (MVLSEHLLVLLGAVLCAPALS). The IGFBP N-terminal domain maps to 23–106 (VLFRCPPCSP…VLGLGTCGKR (84 aa)). Cystine bridges form between cysteine 27–cysteine 56, cysteine 30–cysteine 58, cysteine 38–cysteine 59, cysteine 47–cysteine 62, cysteine 70–cysteine 83, and cysteine 77–cysteine 103. Disordered regions lie at residues 107–127 (RDAE…DQSD) and 139–180 (PAVP…RPAR). A compositionally biased stretch (basic and acidic residues) spans 156–176 (VNRERANEQHRSKTNKSEDKK). Residues 180–262 (RSLCQLQLDQ…SPTVRGDPEC (83 aa)) form the Thyroglobulin type-1 domain. 3 disulfides stabilise this stretch: cysteine 183/cysteine 217, cysteine 228/cysteine 239, and cysteine 241/cysteine 262. Residues 257-259 (RGD) carry the Cell attachment site motif.

In terms of assembly, interacts with igf1 and igf2.

It localises to the secreted. Functionally, IGF-binding proteins prolong the half-life of the IGFs and have been shown to either inhibit or stimulate the growth promoting effects of the IGFs on cell culture. They alter the interaction of IGFs with their cell surface receptors. In Xenopus laevis (African clawed frog), this protein is Insulin-like growth factor-binding protein 2 (igfbp2).